The chain runs to 406 residues: Ribonuclease D (406 aa).

The region spanning 26 to 193 is the 3'-5' exonuclease domain; it reads LITQTTDLEI…VYLLLKKQLE (168 aa). An HRDC domain is found at 231 to 312; it reads KPRELAVLQK…HEGLEVDLAT (82 aa).

The protein belongs to the RNase D family. The cofactor is a divalent metal cation.

It localises to the cytoplasm. The enzyme catalyses Exonucleolytic cleavage that removes extra residues from the 3'-terminus of tRNA to produce 5'-mononucleotides.. In terms of biological role, exonuclease involved in the 3' processing of various precursor tRNAs. Initiates hydrolysis at the 3'-terminus of an RNA molecule and releases 5'-mononucleotides. The sequence is that of Ribonuclease D from Bartonella henselae (strain ATCC 49882 / DSM 28221 / CCUG 30454 / Houston 1) (Rochalimaea henselae).